A 215-amino-acid chain; its full sequence is Na(+)-translocating NADH-quinone reductase subunit D (215 aa).

6 helical membrane-spanning segments follow: residues 14–34 (PFISNNPIMLQVLGICSALAV), 42–62 (FVMALAVTVVTGFSNLFISLI), 72–92 (IIVQMTIIASLVIVVDQLLKA), 103–123 (VFVGLIITNCIVMGRAEAYAM), 131–151 (FLDGIGNGLGYGFILLLVGTI), and 178–198 (NGMLLMPPSAFFLIGLFIWVL).

The protein belongs to the NqrDE/RnfAE family. Composed of six subunits; NqrA, NqrB, NqrC, NqrD, NqrE and NqrF.

The protein localises to the cell inner membrane. The enzyme catalyses a ubiquinone + n Na(+)(in) + NADH + H(+) = a ubiquinol + n Na(+)(out) + NAD(+). NQR complex catalyzes the reduction of ubiquinone-1 to ubiquinol by two successive reactions, coupled with the transport of Na(+) ions from the cytoplasm to the periplasm. NqrA to NqrE are probably involved in the second step, the conversion of ubisemiquinone to ubiquinol. The polypeptide is Na(+)-translocating NADH-quinone reductase subunit D (Tolumonas auensis (strain DSM 9187 / NBRC 110442 / TA 4)).